The primary structure comprises 602 residues: Proline--tRNA ligase (602 aa).

This sequence belongs to the class-II aminoacyl-tRNA synthetase family. ProS type 1 subfamily. In terms of assembly, homodimer.

Its subcellular location is the cytoplasm. The catalysed reaction is tRNA(Pro) + L-proline + ATP = L-prolyl-tRNA(Pro) + AMP + diphosphate. Functionally, catalyzes the attachment of proline to tRNA(Pro) in a two-step reaction: proline is first activated by ATP to form Pro-AMP and then transferred to the acceptor end of tRNA(Pro). As ProRS can inadvertently accommodate and process non-cognate amino acids such as alanine and cysteine, to avoid such errors it has two additional distinct editing activities against alanine. One activity is designated as 'pretransfer' editing and involves the tRNA(Pro)-independent hydrolysis of activated Ala-AMP. The other activity is designated 'posttransfer' editing and involves deacylation of mischarged Ala-tRNA(Pro). The misacylated Cys-tRNA(Pro) is not edited by ProRS. The sequence is that of Proline--tRNA ligase from Thermosynechococcus vestitus (strain NIES-2133 / IAM M-273 / BP-1).